A 436-amino-acid polypeptide reads, in one-letter code: Glutamyl-tRNA reductase (436 aa).

Substrate-binding positions include 49-52 (TCNR), Ser-109, 114-116 (EGQ), and Gln-120. Cys-50 serves as the catalytic Nucleophile. An NADP(+)-binding site is contributed by 198–203 (GAGRMS).

The protein belongs to the glutamyl-tRNA reductase family. Homodimer.

It catalyses the reaction (S)-4-amino-5-oxopentanoate + tRNA(Glu) + NADP(+) = L-glutamyl-tRNA(Glu) + NADPH + H(+). It functions in the pathway porphyrin-containing compound metabolism; protoporphyrin-IX biosynthesis; 5-aminolevulinate from L-glutamyl-tRNA(Glu): step 1/2. Its pathway is porphyrin-containing compound metabolism; chlorophyll biosynthesis. Its function is as follows. Catalyzes the NADPH-dependent reduction of glutamyl-tRNA(Glu) to glutamate 1-semialdehyde (GSA). The chain is Glutamyl-tRNA reductase from Prochlorococcus marinus (strain MIT 9312).